The following is a 255-amino-acid chain: UPF0246 protein BVU_0413 (255 aa).

This sequence belongs to the UPF0246 family.

The protein is UPF0246 protein BVU_0413 of Phocaeicola vulgatus (strain ATCC 8482 / DSM 1447 / JCM 5826 / CCUG 4940 / NBRC 14291 / NCTC 11154) (Bacteroides vulgatus).